Reading from the N-terminus, the 391-residue chain is Yellow-related salivary protein ASP4 (391 aa).

A signal peptide spans 1–18; it reads MKIFLCIIAVVSLQGVVA. Asn29 carries N-linked (GlcNAc...) asparagine glycosylation.

The protein belongs to the major royal jelly protein family. As to expression, female salivary gland (at protein level).

Its subcellular location is the secreted. Its function is as follows. Probably modulates blood feeding of sand flies on vertebrate species by binding and sequestering different mediators involved in the host response. Binds biogenic amines. Binds serotonin and dopamine with high affinity. Binds adrenaline, octopamine and adrenaline with medium affinity. Binds histamine with low affinity. In Phlebotomus orientalis (Phlebotomine sand fly), this protein is Yellow-related salivary protein ASP4.